Consider the following 250-residue polypeptide: 3-deoxy-manno-octulosonate cytidylyltransferase (250 aa).

The protein belongs to the KdsB family.

The protein localises to the cytoplasm. It carries out the reaction 3-deoxy-alpha-D-manno-oct-2-ulosonate + CTP = CMP-3-deoxy-beta-D-manno-octulosonate + diphosphate. It participates in nucleotide-sugar biosynthesis; CMP-3-deoxy-D-manno-octulosonate biosynthesis; CMP-3-deoxy-D-manno-octulosonate from 3-deoxy-D-manno-octulosonate and CTP: step 1/1. It functions in the pathway bacterial outer membrane biogenesis; lipopolysaccharide biosynthesis. Activates KDO (a required 8-carbon sugar) for incorporation into bacterial lipopolysaccharide in Gram-negative bacteria. This chain is 3-deoxy-manno-octulosonate cytidylyltransferase, found in Pectobacterium atrosepticum (strain SCRI 1043 / ATCC BAA-672) (Erwinia carotovora subsp. atroseptica).